The sequence spans 129 residues: Histone H2A.J (129 aa).

Residues Met1 to Ala22 form a disordered region. Ser2 is modified (N-acetylserine). Position 2 is a phosphoserine (Ser2). Lys6 bears the N6-acetyllysine mark. Residues Gln7 to Ser19 show a composition bias toward basic residues. Lys10 bears the N6-lactoyllysine; alternate mark. Residues Lys14 and Lys16 each participate in a glycyl lysine isopeptide (Lys-Gly) (interchain with G-Cter in ubiquitin) cross-link. An N5-methylglutamine modification is found at Gln105. Residue Lys120 forms a Glycyl lysine isopeptide (Lys-Gly) (interchain with G-Cter in ubiquitin) linkage.

Belongs to the histone H2A family. In terms of assembly, the nucleosome is a histone octamer containing two molecules each of H2A, H2B, H3 and H4 assembled in one H3-H4 heterotetramer and two H2A-H2B heterodimers. The octamer wraps approximately 147 bp of DNA. Post-translationally, monoubiquitination of Lys-120 (H2AXK119ub) gives a specific tag for epigenetic transcriptional repression. Following DNA double-strand breaks (DSBs), it is ubiquitinated through 'Lys-63' linkage of ubiquitin moieties. In terms of processing, phosphorylation on Ser-2 is enhanced during mitosis. Phosphorylation on Ser-2 directly represses transcription.

The protein localises to the nucleus. It localises to the chromosome. In terms of biological role, core component of nucleosome. Nucleosomes wrap and compact DNA into chromatin, limiting DNA accessibility to the cellular machineries which require DNA as a template. Histones thereby play a central role in transcription regulation, DNA repair, DNA replication and chromosomal stability. DNA accessibility is regulated via a complex set of post-translational modifications of histones, also called histone code, and nucleosome remodeling. The polypeptide is Histone H2A.J (H2A-IX) (Gallus gallus (Chicken)).